Here is a 204-residue protein sequence, read N- to C-terminus: Cytochrome bo(3) ubiquinol oxidase subunit 3 (204 aa).

The Cytoplasmic segment spans residues 1 to 31 (MATDTLTHATAHAHEHGHHDAGGTKIFGFWI). A helical transmembrane segment spans residues 32-50 (YLMSDCILFSILFATYAVL). At 51–66 (VNGTAGGPTGKDIFEL) the chain is on the periplasmic side. The chain crosses the membrane as a helical span at residues 67–85 (PFVLVETFLLLFSSITYGM). The Cytoplasmic portion of the chain corresponds to 86–101 (AAIAMYKNNKSQVISW). A helical membrane pass occupies residues 102-120 (LALTWLFGAGFIGMEIYEF). The Periplasmic segment spans residues 121–142 (HHLIVNGMGPDRSGFLSAFFAL). A helical transmembrane segment spans residues 143–161 (VGTHGLHVTSGLIWMAVLM). Residues 162 to 184 (VQIARRGLTSTNRTRIMCLSLFW) are Cytoplasmic-facing. The helical transmembrane segment at 185 to 203 (HFLDVVWICVFTVVYLMGA) threads the bilayer. Position 204 (M204) is a topological domain, periplasmic.

This sequence belongs to the cytochrome c oxidase subunit 3 family. In terms of assembly, heterooctamer of two A chains, two B chains, two C chains and two D chains.

It localises to the cell inner membrane. Cytochrome bo(3) ubiquinol terminal oxidase is the component of the aerobic respiratory chain of E.coli that predominates when cells are grown at high aeration. Has proton pump activity across the membrane in addition to electron transfer, pumping 2 protons/electron. This Escherichia coli O6:H1 (strain CFT073 / ATCC 700928 / UPEC) protein is Cytochrome bo(3) ubiquinol oxidase subunit 3 (cyoC).